The primary structure comprises 518 residues: Probable thiamine biosynthetic bifunctional enzyme (518 aa).

The interval 1–229 (MKRQIDYSLY…ATPPCFAQAR (229 aa)) is thiamine-phosphate synthase. Residues 40-44 (QHREK) and Asn-72 contribute to the 4-amino-2-methyl-5-(diphosphooxymethyl)pyrimidine site. Mg(2+) is bound by residues Asp-73 and Asp-92. Residue Ser-111 participates in 4-amino-2-methyl-5-(diphosphooxymethyl)pyrimidine binding. Residue 137-139 (TNT) coordinates 2-[(2R,5Z)-2-carboxy-4-methylthiazol-5(2H)-ylidene]ethyl phosphate. Residue Lys-140 coordinates 4-amino-2-methyl-5-(diphosphooxymethyl)pyrimidine. Residues Gly-173 and 199 to 200 (VS) contribute to the 2-[(2R,5Z)-2-carboxy-4-methylthiazol-5(2H)-ylidene]ethyl phosphate site. The interval 230-518 (SSLTTPKDLL…IERAKLEKAE (289 aa)) is hydroxyethylthiazole kinase. Met-281 provides a ligand contact to 5-(2-hydroxyethyl)-4-methylthiazole. The ATP site is built by Lys-355 and Ser-403. Residue Ala-430 coordinates 5-(2-hydroxyethyl)-4-methylthiazole. The active-site Proton acceptor; for hydroxyethylthiazole kinase activity is Cys-433.

This sequence in the N-terminal section; belongs to the thiamine-phosphate synthase family. It in the C-terminal section; belongs to the Thz kinase family. Mg(2+) is required as a cofactor.

The catalysed reaction is 2-[(2R,5Z)-2-carboxy-4-methylthiazol-5(2H)-ylidene]ethyl phosphate + 4-amino-2-methyl-5-(diphosphooxymethyl)pyrimidine + 2 H(+) = thiamine phosphate + CO2 + diphosphate. It carries out the reaction 2-(2-carboxy-4-methylthiazol-5-yl)ethyl phosphate + 4-amino-2-methyl-5-(diphosphooxymethyl)pyrimidine + 2 H(+) = thiamine phosphate + CO2 + diphosphate. It catalyses the reaction 4-methyl-5-(2-phosphooxyethyl)-thiazole + 4-amino-2-methyl-5-(diphosphooxymethyl)pyrimidine + H(+) = thiamine phosphate + diphosphate. The enzyme catalyses 5-(2-hydroxyethyl)-4-methylthiazole + ATP = 4-methyl-5-(2-phosphooxyethyl)-thiazole + ADP + H(+). Its pathway is cofactor biosynthesis; thiamine diphosphate biosynthesis; 4-methyl-5-(2-phosphoethyl)-thiazole from 5-(2-hydroxyethyl)-4-methylthiazole: step 1/1. It functions in the pathway cofactor biosynthesis; thiamine diphosphate biosynthesis; thiamine phosphate from 4-amino-2-methyl-5-diphosphomethylpyrimidine and 4-methyl-5-(2-phosphoethyl)-thiazole: step 1/1. Condenses 4-methyl-5-(beta-hydroxyethyl)thiazole monophosphate (THZ-P) and 2-methyl-4-amino-5-hydroxymethyl pyrimidine pyrophosphate (HMP-PP) to form thiamine monophosphate (TMP). This is Probable thiamine biosynthetic bifunctional enzyme (thi4) from Schizosaccharomyces pombe (strain 972 / ATCC 24843) (Fission yeast).